The following is a 195-amino-acid chain: Erythropoietin (195 aa).

A signal peptide spans 1–28 (MGVRGRLALLPLALLCLLVLALGLPVLG). Disulfide bonds link C35–C190 and C57–C61. N52 is a glycosylation site (N-linked (GlcNAc...) asparagine). N-linked (GlcNAc...) asparagine glycosylation is found at N66 and N111.

It belongs to the EPO/TPO family.

The protein resides in the secreted. Hormone involved in the regulation of erythrocyte proliferation and differentiation and the maintenance of a physiological level of circulating erythrocyte mass. Binds to EPOR leading to EPOR dimerization and JAK2 activation thereby activating specific downstream effectors, including STAT1 and STAT3. This Oryctolagus cuniculus (Rabbit) protein is Erythropoietin (EPO).